Consider the following 131-residue polypeptide: Interleukin-13 (131 aa).

The first 18 residues, Met1 to Ala18, serve as a signal peptide directing secretion. N-linked (GlcNAc...) asparagine glycans are attached at residues Asn42, Asn52, and Asn75. Intrachain disulfides connect Cys51/Cys79 and Cys67/Cys93.

It belongs to the IL-4/IL-13 family. Interacts with IL13RA2.

It localises to the secreted. In terms of biological role, cytokine that plays important roles in allergic inflammation and immune response to parasite infection. Synergizes with IL2 in regulating interferon-gamma synthesis. Stimulates B-cell proliferation, and activation of eosinophils, basophils, and mast cells. Plays an important role in controlling IL33 activity by modulating the production of transmembrane and soluble forms of interleukin-1 receptor-like 1/IL1RL1. Displays the capacity to antagonize Th1-driven proinflammatory immune response and downregulates synthesis of many proinflammatory cytokines including IL1, IL6, IL10, IL12 and TNF-alpha through a mechanism that partially involves suppression of NF-kappa-B. Also functions on nonhematopoietic cells, including endothelial cells where it induces vascular cell adhesion protein 1/VCAM1, which is important in the recruitment of eosinophils. Exerts its biological effects through its receptors which comprises the IL4R chain and the IL13RA1 chain, to activate JAK1 and TYK2, leading to the activation of STAT6. Aside from IL13RA1, another receptor IL13RA2 acts as a high affinity decoy for IL13 and mediates internalization and depletion of extracellular IL13. The sequence is that of Interleukin-13 (Il13) from Mus musculus (Mouse).